The sequence spans 113 residues: U11-theraphotoxin-Hhn1a (113 aa).

An N-terminal signal peptide occupies residues 1–21 (MNTVRVTFLLVFVLAVSLGQT). The propeptide occupies 22–74 (DKDENRMEMQEKTEQGKSYLDFAENLLLQKLEELEAKLLEEDSEESRNSRQKR). Cystine bridges form between Cys-75–Cys-90, Cys-82–Cys-95, and Cys-89–Cys-110.

The protein belongs to the neurotoxin 14 (magi-1) family. 01 (HNTX-16) subfamily. In terms of tissue distribution, expressed by the venom gland.

It is found in the secreted. Its function is as follows. Probable ion channel inhibitor. This Cyriopagopus hainanus (Chinese bird spider) protein is U11-theraphotoxin-Hhn1a.